Reading from the N-terminus, the 424-residue chain is Imidazolonepropionase (424 aa).

Residues His-81 and His-83 each contribute to the Fe(3+) site. Zn(2+) contacts are provided by His-81 and His-83. 4-imidazolone-5-propanoate is bound by residues Arg-90, Tyr-153, and His-186. Tyr-153 is a binding site for N-formimidoyl-L-glutamate. His-251 is a Fe(3+) binding site. A Zn(2+)-binding site is contributed by His-251. Residue Glu-254 participates in 4-imidazolone-5-propanoate binding. Asp-325 is a binding site for Fe(3+). Asp-325 contacts Zn(2+). Asn-327 and Gly-329 together coordinate N-formimidoyl-L-glutamate. Thr-330 is a 4-imidazolone-5-propanoate binding site.

It belongs to the metallo-dependent hydrolases superfamily. HutI family. Requires Zn(2+) as cofactor. The cofactor is Fe(3+).

The protein localises to the cytoplasm. It catalyses the reaction 4-imidazolone-5-propanoate + H2O = N-formimidoyl-L-glutamate. It participates in amino-acid degradation; L-histidine degradation into L-glutamate; N-formimidoyl-L-glutamate from L-histidine: step 3/3. Catalyzes the hydrolytic cleavage of the carbon-nitrogen bond in imidazolone-5-propanoate to yield N-formimidoyl-L-glutamate. It is the third step in the universal histidine degradation pathway. The polypeptide is Imidazolonepropionase (Syntrophobacter fumaroxidans (strain DSM 10017 / MPOB)).